The following is a 171-amino-acid chain: Adenine phosphoribosyltransferase (171 aa).

The protein belongs to the purine/pyrimidine phosphoribosyltransferase family. Homodimer.

The protein resides in the cytoplasm. The enzyme catalyses AMP + diphosphate = 5-phospho-alpha-D-ribose 1-diphosphate + adenine. The protein operates within purine metabolism; AMP biosynthesis via salvage pathway; AMP from adenine: step 1/1. Catalyzes a salvage reaction resulting in the formation of AMP, that is energically less costly than de novo synthesis. This chain is Adenine phosphoribosyltransferase, found in Geotalea daltonii (strain DSM 22248 / JCM 15807 / FRC-32) (Geobacter daltonii).